The sequence spans 122 residues: Large ribosomal subunit protein uL18 (122 aa).

The segment at 1 to 25 (MSQISRKQQTQKRHRRLRRHITGTS) is disordered. The segment covering 9 to 21 (QTQKRHRRLRRHI) has biased composition (basic residues).

The protein belongs to the universal ribosomal protein uL18 family. Part of the 50S ribosomal subunit; part of the 5S rRNA/L5/L18/L25 subcomplex. Contacts the 5S and 23S rRNAs.

Functionally, this is one of the proteins that bind and probably mediate the attachment of the 5S RNA into the large ribosomal subunit, where it forms part of the central protuberance. The polypeptide is Large ribosomal subunit protein uL18 (Synechococcus sp. (strain CC9605)).